Consider the following 356-residue polypeptide: Galactosylgalactosylxylosylprotein 3-beta-glucuronosyltransferase sqv-8 (356 aa).

The Cytoplasmic portion of the chain corresponds to Met-1–Lys-9. Residues Trp-10–Ile-30 form a helical; Signal-anchor for type II membrane protein membrane-spanning segment. The Lumenal segment spans residues Asn-31 to Asn-356. N-linked (GlcNAc...) asparagine glycosylation is found at Asn-93 and Asn-173. Asp-208 serves as a coordination point for Mn(2+). N-linked (GlcNAc...) asparagine glycosylation is found at Asn-246 and Asn-272. The active-site Proton acceptor is the Glu-294.

Belongs to the glycosyltransferase 43 family.

Its subcellular location is the membrane. The enzyme catalyses 3-O-(beta-D-galactosyl-(1-&gt;3)-beta-D-galactosyl-(1-&gt;4)-beta-D-xylosyl)-L-seryl-[protein] + UDP-alpha-D-glucuronate = 3-O-(beta-D-GlcA-(1-&gt;3)-beta-D-Gal-(1-&gt;3)-beta-D-Gal-(1-&gt;4)-beta-D-Xyl)-L-seryl-[protein] + UDP + H(+). Its function is as follows. Glycosyltransferase required for the biosynthesis of the tetrasaccharide (GlcA-Gal-Gal-Xyl-)Ser core linker of heparan sulfate and chondroitin sulfate. May be involved in the biosynthesis of the HNK-1 carbohydrate epitope on glycoproteins. Required for embryonic development. Involved in the elongation of the pharyngeal isthmus during the later stages of embryonic development. Involved in vulval epithelium invagination. The sequence is that of Galactosylgalactosylxylosylprotein 3-beta-glucuronosyltransferase sqv-8 (sqv-8) from Caenorhabditis elegans.